We begin with the raw amino-acid sequence, 697 residues long: MERNHWNEKSSGAKRSRERDLTLSTIRSILAADERLRIKASSYLGVGRGVDDEAVIDIFPTGQTMSFLRLLHGFLGTCRGQSMHQVLRDPCVLRKQLLYGVCKTLFDTITVRRVAEEWKLHAALFPYRALDEEDLEQYLLVWSASLRQSVQTGVLGALRDILYQYADNDDYGLYVDWCVTVGLVPLLDVKTKPSEAAERAQFVRAAVQRATETHPLAQDLLQANLALLLQVAERLGAVRIANAPEVRVFKKVRSERLEAQLRGKHIRLYVAAEPLAYERDKLLFTTPVAHLHEEILRYDGLCRHQKICQLLNTFPVKVVTASRHELNCKKLVEMMEQHDRGSDAKKSIMKFLLNVSDSKSRIGIEDSVESFLQDLTPSLVDQNRLLPARGPGGPGVVGPGGAVVGGPAGHVGLLPPPPGPAAPERDIRDLFKKQVIKCLEEQIQSQVDEIQDLRTLNQTWENRVRELRDLLTRYASRREDSMSLGARDAELYHLPVLEAVRKARDAAPFRPLAVEDNRLVANSFFSQFVPGTESLERFLTQLWENEYFRTFRLRRLVTHQGAEEAIVYSNYTVERVTLPYLCHILALGTLDPVPEAYLQLSFGEIVAAAYDDSKFCRYVELICSREKARRRQMSREAAGGVPERGTASSGGPGTLERSAPRRLITADEERRGPERVGRFRNGGPDDPRRAGGPYGFH.

Positions 633–697 (MSREAAGGVP…RRAGGPYGFH (65 aa)) are disordered. A compositionally biased stretch (basic and acidic residues) spans 664–689 (ITADEERRGPERVGRFRNGGPDDPRR).

Belongs to the herpesviridae portal protein family. Homododecamerizes. Interacts with terminase subunits TRM1 and TRM3.

The protein localises to the virion. It is found in the host nucleus. In terms of biological role, forms a portal in the viral capsid through which viral DNA is translocated during DNA packaging. Assembles as a dodecamer at a single fivefold axe of the T=16 icosahedric capsid. Binds to the molecular motor that translocates the viral DNA, termed terminase. This chain is Portal protein (UL104), found in Homo sapiens (Human).